The following is a 106-amino-acid chain: Large ribosomal subunit protein eL42 (106 aa).

The interval 34–53 (YAQGKRRYDRKQSGYGGQTK) is disordered.

This sequence belongs to the eukaryotic ribosomal protein eL42 family. Component of the large ribosomal subunit.

It is found in the cytoplasm. Its function is as follows. Component of the large ribosomal subunit. The ribosome is a large ribonucleoprotein complex responsible for the synthesis of proteins in the cell. The chain is Large ribosomal subunit protein eL42 (Rpl36a) from Canis lupus familiaris (Dog).